The following is a 427-amino-acid chain: Glutamate-1-semialdehyde 2,1-aminomutase (427 aa).

At lysine 265 the chain carries N6-(pyridoxal phosphate)lysine.

The protein belongs to the class-III pyridoxal-phosphate-dependent aminotransferase family. HemL subfamily. In terms of assembly, homodimer. Requires pyridoxal 5'-phosphate as cofactor.

It is found in the cytoplasm. The catalysed reaction is (S)-4-amino-5-oxopentanoate = 5-aminolevulinate. It participates in porphyrin-containing compound metabolism; protoporphyrin-IX biosynthesis; 5-aminolevulinate from L-glutamyl-tRNA(Glu): step 2/2. This is Glutamate-1-semialdehyde 2,1-aminomutase from Burkholderia thailandensis (strain ATCC 700388 / DSM 13276 / CCUG 48851 / CIP 106301 / E264).